A 338-amino-acid chain; its full sequence is Erlin-2 (338 aa).

Topologically, residues 1–3 (MAQ) are cytoplasmic. The helical transmembrane segment at 4–24 (LGAVVAVAASFFCASLFSAVH) threads the bilayer. The Lumenal segment spans residues 25-338 (KIEEGHIGVY…DEPMEADSEN (314 aa)). N-linked (GlcNAc...) asparagine glycosylation is present at asparagine 106. The segment at 177–309 (EAIRRNYELM…DIPNMFMDSA (133 aa)) is interaction with ERLIN1. N6-acetyllysine is present on lysine 267.

The protein belongs to the band 7/mec-2 family. Forms a heteromeric complex with ERLIN1. In complex with ERLIN1, interacts with RNF170. Interacts with activated ITPR1, independently of the degree of ITPR1 polyubiquitination. Interacts with SCAP, INSIG1, SREBF1 and SREBF2 under cholesterol sufficiency conditions; indicative for an association with the SCAP-SREBP-INSIG complex. Probably part of an AMFR/gp78 and INSIG1-containing ubiquitin ligase complex involved in ERAD of HMGCR. Interacts with TMUB1; TMUB1 bridges the association with AMFR. Interacts with SYVN1 and RNF139. Interacts with TMEM259. Interacts with TMEM41B. Deubiquitinated by USP25; leading to stabilization.

The protein resides in the endoplasmic reticulum membrane. Its function is as follows. Component of the ERLIN1/ERLIN2 complex which mediates the endoplasmic reticulum-associated degradation (ERAD) of inositol 1,4,5-trisphosphate receptors (IP3Rs) such as ITPR1. Promotes sterol-accelerated ERAD of HMGCR probably implicating an AMFR/gp78-containing ubiquitin ligase complex. Involved in regulation of cellular cholesterol homeostasis by regulation the SREBP signaling pathway. May promote ER retention of the SCAP-SREBF complex. In Bos taurus (Bovine), this protein is Erlin-2 (ERLIN2).